A 44-amino-acid chain; its full sequence is Protein PsbN (44 aa).

The helical transmembrane segment at phenylalanine 6–valine 26 threads the bilayer.

Belongs to the PsbN family.

Its subcellular location is the plastid. It is found in the chloroplast thylakoid membrane. In terms of biological role, may play a role in photosystem I and II biogenesis. The chain is Protein PsbN from Oltmannsiellopsis viridis (Marine flagellate).